The chain runs to 548 residues: Tau-cadinol synthase (548 aa).

2 residues coordinate Mg(2+): D303 and D307. D303, D307, and R443 together coordinate substrate. Residues 303-307 carry the DDXXD motif motif; that stretch reads DDTYD.

Belongs to the terpene synthase family. Monomer. Requires Mg(2+) as cofactor. The cofactor is Mn(2+). Constitutively expressed in aerial tissues, but barely observed in roots.

Its subcellular location is the cytoplasm. It carries out the reaction (2E,6E)-farnesyl diphosphate + H2O = tau-cadinol + diphosphate. It functions in the pathway secondary metabolite biosynthesis; terpenoid biosynthesis. Its function is as follows. Sesquiterpene synthase that catalyzes the formation of a blend of sesquiterpenes and sesquiterpenoid alcohols. Converts farnesyl diphosphate to tau-cadinol. In Zea mays (Maize), this protein is Tau-cadinol synthase.